The following is a 251-amino-acid chain: Extracellular superoxide dismutase [Cu-Zn] (251 aa).

The first 15 residues, 1-15 (MLAFLFYGLLLAACG), serve as a signal peptide directing secretion. The propeptide occupies 16–24 (SVTMSNPGE). 2 disulfides stabilise this stretch: Cys-77-Cys-222 and Cys-139-Cys-221. N-linked (GlcNAc...) asparagine glycosylation occurs at Asn-121. Cu cation-binding residues include His-128, His-130, and His-145. Zn(2+) is bound by residues His-145, His-153, His-156, and Asp-159. His-195 is a Cu cation binding site. The tract at residues 230–251 (AAWESQTKERKKRRRESECKTT) is disordered.

Belongs to the Cu-Zn superoxide dismutase family. In terms of assembly, homotetramer. Directly interacts with ATP7A/MNK; this interaction is copper-dependent and is required for SOD3 activity. The cofactor is Cu cation. It depends on Zn(2+) as a cofactor.

Its subcellular location is the secreted. It localises to the extracellular space. It is found in the golgi apparatus. The protein localises to the trans-Golgi network. The catalysed reaction is 2 superoxide + 2 H(+) = H2O2 + O2. Protect the extracellular space from toxic effect of reactive oxygen intermediates by converting superoxide radicals into hydrogen peroxide and oxygen. This chain is Extracellular superoxide dismutase [Cu-Zn] (Sod3), found in Mus musculus (Mouse).